The chain runs to 741 residues: Pentatricopeptide repeat-containing protein At1g05670, mitochondrial (741 aa).

The transit peptide at 1–21 (MKKPFTGLLMKRGTLSSFRNF) directs the protein to the mitochondrion. PPR repeat units follow at residues 174–208 (DPRV…GLVL), 209–244 (SVDS…GVCW), 245–279 (NVAS…GYTP), 280–314 (DVIS…GLKP), 315–349 (NSYI…GILP), 350–384 (DTVV…DITP), 385–419 (DVLT…GLEP), 420–454 (DSVT…GCSP), 455–489 (NVVT…GLQP), 490–524 (NIFT…GLNA), 525–559 (DTVT…GLQP), 560–594 (TIVT…GIAP), 595–629 (NATT…GVGP), 630–664 (DGKT…GFSV), and 665–699 (SVST…GLAA).

The protein belongs to the PPR family. P subfamily.

It localises to the mitochondrion. The chain is Pentatricopeptide repeat-containing protein At1g05670, mitochondrial from Arabidopsis thaliana (Mouse-ear cress).